A 349-amino-acid chain; its full sequence is Methionine import ATP-binding protein MetN (349 aa).

Positions 5 to 245 (IDLKNITVQF…PQKQLTRQFV (241 aa)) constitute an ABC transporter domain. ATP is bound at residue 37–44 (GFSGAGKS).

It belongs to the ABC transporter superfamily. Methionine importer (TC 3.A.1.24) family. The complex is composed of two ATP-binding proteins (MetN), two transmembrane proteins (MetI) and a solute-binding protein (MetQ).

Its subcellular location is the cell membrane. It carries out the reaction L-methionine(out) + ATP + H2O = L-methionine(in) + ADP + phosphate + H(+). The catalysed reaction is D-methionine(out) + ATP + H2O = D-methionine(in) + ADP + phosphate + H(+). Its function is as follows. Part of the ABC transporter complex MetNIQ involved in methionine import. Responsible for energy coupling to the transport system. The chain is Methionine import ATP-binding protein MetN from Lactobacillus johnsonii (strain CNCM I-12250 / La1 / NCC 533).